The chain runs to 124 residues: Photoactive yellow protein (124 aa).

Residues 22–85 (AESLPFGAVL…GEFLKFNRTG (64 aa)) form the PAS domain. The residue at position 68 (cysteine 68) is an S-(4-hydroxycinnamyl)cysteine.

The protein belongs to the photoactive yellow protein family. In terms of processing, the 4-hydroxycinnamic acid (p-coumaric acid) chromophore is covalently bound via a thioester linkage.

Functionally, this photoactive protein is a photoreceptor with kinetics similar to that of rhodopsin. The sequence is that of Photoactive yellow protein (pyp) from Rhodobacter capsulatus (strain ATCC BAA-309 / NBRC 16581 / SB1003).